Consider the following 86-residue polypeptide: Small ribosomal subunit protein bS20 (86 aa).

A disordered region spans residues 1–27; it reads MANNKSAKKRAIQAEKRRQHNASRRSM.

This sequence belongs to the bacterial ribosomal protein bS20 family.

Binds directly to 16S ribosomal RNA. This Vibrio cholerae serotype O1 (strain ATCC 39541 / Classical Ogawa 395 / O395) protein is Small ribosomal subunit protein bS20.